A 355-amino-acid polypeptide reads, in one-letter code: Erythronate-4-phosphate dehydrogenase (355 aa).

Residues S45 and T66 each coordinate substrate. D146 contacts NAD(+). The active site involves R206. Residue D229 coordinates NAD(+). Residue E234 is part of the active site. The active-site Proton donor is H251. G254 contributes to the NAD(+) binding site. Residue Y255 coordinates substrate.

It belongs to the D-isomer specific 2-hydroxyacid dehydrogenase family. PdxB subfamily. Homodimer.

It is found in the cytoplasm. The catalysed reaction is 4-phospho-D-erythronate + NAD(+) = (R)-3-hydroxy-2-oxo-4-phosphooxybutanoate + NADH + H(+). The protein operates within cofactor biosynthesis; pyridoxine 5'-phosphate biosynthesis; pyridoxine 5'-phosphate from D-erythrose 4-phosphate: step 2/5. Its function is as follows. Catalyzes the oxidation of erythronate-4-phosphate to 3-hydroxy-2-oxo-4-phosphonooxybutanoate. The chain is Erythronate-4-phosphate dehydrogenase from Acinetobacter baumannii (strain ATCC 17978 / DSM 105126 / CIP 53.77 / LMG 1025 / NCDC KC755 / 5377).